The chain runs to 105 residues: Large ribosomal subunit protein uL24 (105 aa).

It belongs to the universal ribosomal protein uL24 family. Part of the 50S ribosomal subunit.

Functionally, one of two assembly initiator proteins, it binds directly to the 5'-end of the 23S rRNA, where it nucleates assembly of the 50S subunit. In terms of biological role, one of the proteins that surrounds the polypeptide exit tunnel on the outside of the subunit. This Staphylococcus carnosus (strain TM300) protein is Large ribosomal subunit protein uL24.